A 691-amino-acid polypeptide reads, in one-letter code: Lectin-domain containing receptor kinase VI.4 (691 aa).

The N-terminal stretch at 1-19 is a signal peptide; the sequence is MGRAKSMVSLLLVLFLVRA. Residues 20–306 are Extracellular-facing; the sequence is HVATTETTTE…AKKRGYNGKV (287 aa). A legume-lectin like region spans residues 26–273; sequence TTTEFIFHGF…AHYVMGWSFA (248 aa). The chain crosses the membrane as a helical span at residues 307–327; it reads IALIVALSTVISIMLVLLFLF. The Cytoplasmic portion of the chain corresponds to 328 to 691; sequence MMYKKRMQQE…ISSTSLISGR (364 aa). The 279-residue stretch at 363–641 folds into the Protein kinase domain; sequence FKENRVVGTG…LNRDEDVPEI (279 aa). ATP contacts are provided by residues 369-377 and Lys-392; that span reads VGTGGFGIV. Catalysis depends on Asp-491, which acts as the Proton acceptor.

The protein in the C-terminal section; belongs to the protein kinase superfamily. Ser/Thr protein kinase family. In the N-terminal section; belongs to the leguminous lectin family.

It is found in the cell membrane. The catalysed reaction is L-seryl-[protein] + ATP = O-phospho-L-seryl-[protein] + ADP + H(+). It carries out the reaction L-threonyl-[protein] + ATP = O-phospho-L-threonyl-[protein] + ADP + H(+). In terms of biological role, involved in negative regulation of abscisic acid response in seed germination. The chain is Lectin-domain containing receptor kinase VI.4 (LECRK64) from Arabidopsis thaliana (Mouse-ear cress).